We begin with the raw amino-acid sequence, 557 residues long: 6-phosphofructo-2-kinase/fructose-2,6-bisphosphatase 2 (557 aa).

Over residues 1–16 (MSENSTFSTEDSSSSS) the composition is skewed to low complexity. The disordered stretch occupies residues 1-21 (MSENSTFSTEDSSSSSYKPHA). At Ser2 the chain carries N-acetylserine. The interval 2–251 (SENSTFSTED…VYYLMNIHVH (250 aa)) is 6-phosphofructo-2-kinase. Ser32 is subject to Phosphoserine; by PKA. Position 48–56 (48–56 (GLPARGKTY)) interacts with ATP. Residues Arg81 and Arg105 each contribute to the beta-D-fructose 6-phosphate site. Asp131 is an active-site residue. Thr133 and Arg139 together coordinate beta-D-fructose 6-phosphate. Cys161 is a catalytic residue. Residue 170–175 (NILEVK) coordinates ATP. The beta-D-fructose 6-phosphate site is built by Lys175, Arg196, and Tyr200. Residues 252 to 557 (PRTIYLCRHG…PSMASLTLLS (306 aa)) are fructose-2,6-bisphosphatase. Position 259 (Arg259) interacts with beta-D-fructose 2,6-bisphosphate. Catalysis depends on His260, which acts as the Tele-phosphohistidine intermediate. Residues Asn266 and Gly272 each contribute to the beta-D-fructose 2,6-bisphosphate site. Glu329 (proton donor/acceptor) is an active-site residue. Tyr340, Arg354, Lys358, Tyr369, Gln395, and Arg399 together coordinate beta-D-fructose 2,6-bisphosphate. Position 351-354 (351-354 (FALR)) interacts with ATP. Residues 395-399 (QAVMR) and Tyr431 each bind ATP. The interval 449–495 (RDKPTHNFPKSQTPVRMRRNSFTPLSSSNTIRRPRNYSVGSRPLKPL) is disordered. Residues 456 to 479 (FPKSQTPVRMRRNSFTPLSSSNTI) are compositionally biased toward polar residues. Ser469 bears the Phosphoserine mark. Thr471 carries the phosphothreonine modification. At Thr478 the chain carries Phosphothreonine; by PKC. Residues Ser486 and Ser496 each carry the phosphoserine modification.

The protein in the C-terminal section; belongs to the phosphoglycerate mutase family. In terms of assembly, homodimer. Forms a heterodimer with PFKFB3. In terms of processing, phosphorylation by AMPK stimulates activity.

It catalyses the reaction beta-D-fructose 2,6-bisphosphate + H2O = beta-D-fructose 6-phosphate + phosphate. The catalysed reaction is beta-D-fructose 6-phosphate + ATP = beta-D-fructose 2,6-bisphosphate + ADP + H(+). With respect to regulation, phosphorylation results in the activation of the kinase activity. Its function is as follows. Synthesis and degradation of fructose 2,6-bisphosphate. In Rattus norvegicus (Rat), this protein is 6-phosphofructo-2-kinase/fructose-2,6-bisphosphatase 2 (Pfkfb2).